A 255-amino-acid polypeptide reads, in one-letter code: Trans-aconitate 2-methyltransferase (255 aa).

Belongs to the methyltransferase superfamily. Tam family.

It localises to the cytoplasm. It catalyses the reaction trans-aconitate + S-adenosyl-L-methionine = (E)-3-(methoxycarbonyl)pent-2-enedioate + S-adenosyl-L-homocysteine. Functionally, catalyzes the S-adenosylmethionine monomethyl esterification of trans-aconitate. The protein is Trans-aconitate 2-methyltransferase of Mycolicibacterium gilvum (strain PYR-GCK) (Mycobacterium gilvum (strain PYR-GCK)).